Reading from the N-terminus, the 128-residue chain is Sulfurtransferase TusD (128 aa).

Residue Cys-78 is the Cysteine persulfide intermediate of the active site.

This sequence belongs to the DsrE/TusD family. In terms of assembly, heterohexamer, formed by a dimer of trimers. The hexameric TusBCD complex contains 2 copies each of TusB, TusC and TusD. The TusBCD complex interacts with TusE.

It localises to the cytoplasm. Functionally, part of a sulfur-relay system required for 2-thiolation of 5-methylaminomethyl-2-thiouridine (mnm(5)s(2)U) at tRNA wobble positions. Accepts sulfur from TusA and transfers it in turn to TusE. The protein is Sulfurtransferase TusD of Escherichia coli (strain K12 / MC4100 / BW2952).